Reading from the N-terminus, the 291-residue chain is MSLNLRDLEYFYQLSKLRSFTNVAKHFRVSQPTISYAIKRLETYYDCDLFYKDSSHQVVDLTPEGELLAMRTNEILSELNHTKKAIHRSSMKDFKVGFPPIISSYLLSKQDNLNFFNALHMIYGGSNELLSLLLNEEIDSSLLGSLEKIKHPQLEIEELFQKEFFIIMSDSHPLANEKELGFKDLLNEDFILLGEHNIHFNAFNRLNEKYNQSANVVLKLDDAHTIKELVRKNLGISLMADIRLSEDFKNLVKVPFIEEDKQFFHINYAYQKNSILSESEKNFLEILKTLK.

The region spanning 1–60 (MSLNLRDLEYFYQLSKLRSFTNVAKHFRVSQPTISYAIKRLETYYDCDLFYKDSSHQVVD) is the HTH lysR-type domain. Residues 20–39 (FTNVAKHFRVSQPTISYAIK) constitute a DNA-binding region (H-T-H motif).

It belongs to the LysR transcriptional regulatory family.

It is found in the cytoplasm. Required for malolactic fermentation. It is most probably a transcriptional activator. This is Malolactic fermentation system transcriptional activator (mleR) from Lactococcus lactis subsp. lactis (strain IL1403) (Streptococcus lactis).